We begin with the raw amino-acid sequence, 85 residues long: Toxin BmKa3 (85 aa).

Residues 1-19 form the signal peptide; sequence MNYLVFFSLALLLMTGVES. An LCN-type CS-alpha/beta domain is found at 21–83; it reads RDGYIADDKN…VPIRVPGKCN (63 aa). Intrachain disulfides connect Cys31/Cys82, Cys35/Cys55, Cys41/Cys65, and Cys45/Cys67.

This sequence belongs to the long (4 C-C) scorpion toxin superfamily. Sodium channel inhibitor family. Alpha subfamily. As to expression, expressed by the venom gland.

The protein resides in the secreted. Alpha toxins bind voltage-independently at site-3 of sodium channels (Nav) and inhibit the inactivation of the activated channels, thereby blocking neuronal transmission. The chain is Toxin BmKa3 from Olivierus martensii (Manchurian scorpion).